A 1157-amino-acid chain; its full sequence is ATP-dependent helicase/deoxyribonuclease subunit B (1157 aa).

The UvrD-like helicase ATP-binding domain occupies 1-275; it reads MTLHAYLGRA…QYFNQLYRFN (275 aa). Position 8–15 (8–15) interacts with ATP; it reads GRAGTGKS. The 315-residue stretch at 269–583 folds into the UvrD-like helicase C-terminal domain; it reads NQLYRFNNQD…SIGTMDLAKV (315 aa). Positions 784, 1112, 1115, and 1121 each coordinate [4Fe-4S] cluster.

The protein belongs to the helicase family. AddB/RexB type 1 subfamily. In terms of assembly, heterodimer of AddA and AddB. The cofactor is Mg(2+). It depends on [4Fe-4S] cluster as a cofactor.

The heterodimer acts as both an ATP-dependent DNA helicase and an ATP-dependent, dual-direction single-stranded exonuclease. Recognizes the chi site generating a DNA molecule suitable for the initiation of homologous recombination. The AddB subunit has 5' -&gt; 3' nuclease activity but not helicase activity. This is ATP-dependent helicase/deoxyribonuclease subunit B from Staphylococcus aureus (strain JH9).